The primary structure comprises 968 residues: RNA polymerase-associated protein RapA (968 aa).

Positions 164 to 334 (DVGRRHAPRV…FARLRLLDPN (171 aa)) constitute a Helicase ATP-binding domain. 177–184 (DEVGLGKT) serves as a coordination point for ATP. The short motif at 280–283 (DEAH) is the DEAH box element. Residues 490–662 (RVEWLMGYLT…YLAAPENTEG (173 aa)) enclose the Helicase C-terminal domain.

The protein belongs to the SNF2/RAD54 helicase family. RapA subfamily. As to quaternary structure, interacts with the RNAP. Has a higher affinity for the core RNAP than for the holoenzyme. Its ATPase activity is stimulated by binding to RNAP.

In terms of biological role, transcription regulator that activates transcription by stimulating RNA polymerase (RNAP) recycling in case of stress conditions such as supercoiled DNA or high salt concentrations. Probably acts by releasing the RNAP, when it is trapped or immobilized on tightly supercoiled DNA. Does not activate transcription on linear DNA. Probably not involved in DNA repair. The chain is RNA polymerase-associated protein RapA from Cronobacter sakazakii (strain ATCC BAA-894) (Enterobacter sakazakii).